Consider the following 190-residue polypeptide: Frataxin homolog, mitochondrial (190 aa).

This sequence belongs to the frataxin family. As to quaternary structure, monomer (probable predominant form). Oligomer. Interacts with IscU. Component of the mitochondrial core iron-sulfur cluster (ISC) assembly complex at least composed of the cysteine desulfurase Nfs1, the scaffold protein IscU, the accessory protein bcn92/Isd11/Lyrm4, and probably fh/frataxin.

It localises to the mitochondrion. The catalysed reaction is 4 Fe(2+) + O2 + 4 H(+) = 4 Fe(3+) + 2 H2O. Functionally, promotes the biosynthesis of heme as well as the assembly and repair of iron-sulfur clusters by delivering Fe(2+) to proteins involved in these pathways. May play a role in the protection against iron-catalyzed oxidative stress through its ability to catalyze the oxidation of Fe(2+) to Fe(3+). May be able to store large amounts of the metal in the form of a ferrihydrite mineral by oligomerization. Required for ecdysteroidogenesis in the prothoracic gland which is necessary for larval to pupal transition. This chain is Frataxin homolog, mitochondrial, found in Drosophila melanogaster (Fruit fly).